We begin with the raw amino-acid sequence, 648 residues long: Bifunctional protein TilS/HprT (648 aa).

29 to 34 (SGGPDS) is a binding site for ATP. Asp-627 serves as a coordination point for Mg(2+).

It in the N-terminal section; belongs to the tRNA(Ile)-lysidine synthase family. This sequence in the C-terminal section; belongs to the purine/pyrimidine phosphoribosyltransferase family. Requires Mg(2+) as cofactor.

It localises to the cytoplasm. The catalysed reaction is IMP + diphosphate = hypoxanthine + 5-phospho-alpha-D-ribose 1-diphosphate. The enzyme catalyses GMP + diphosphate = guanine + 5-phospho-alpha-D-ribose 1-diphosphate. It catalyses the reaction cytidine(34) in tRNA(Ile2) + L-lysine + ATP = lysidine(34) in tRNA(Ile2) + AMP + diphosphate + H(+). Ligates lysine onto the cytidine present at position 34 of the AUA codon-specific tRNA(Ile) that contains the anticodon CAU, in an ATP-dependent manner. Cytidine is converted to lysidine, thus changing the amino acid specificity of the tRNA from methionine to isoleucine. The chain is Bifunctional protein TilS/HprT (tilS/hprT) from Listeria monocytogenes serovar 1/2a (strain ATCC BAA-679 / EGD-e).